A 360-amino-acid chain; its full sequence is Protein phosphatase 1L (360 aa).

Over 1–25 (MIEDTMTLLSLLGRIMRYFLLRPET) the chain is Extracellular. A helical membrane pass occupies residues 26-42 (LFLLCISLALWSYFFHT). The Cytoplasmic segment spans residues 43-360 (DEVKTIVKSS…FRNSSKTEEQ (318 aa)). Residues 92 to 351 (NVAVYSIQGR…DNITVMVVKF (260 aa)) enclose the PPM-type phosphatase domain. The Mn(2+) site is built by Asp-128, Gly-129, Asp-302, and Asp-342.

The protein belongs to the PP2C family. As to quaternary structure, interacts with MAP3K7/TAK1. Interacts with MAP3K5. Requires Mg(2+) as cofactor. Mn(2+) serves as cofactor. In terms of tissue distribution, ubiquitous. Highly expressed in heart, placenta, lung, liver, kidney and pancreas.

Its subcellular location is the membrane. It catalyses the reaction O-phospho-L-seryl-[protein] + H2O = L-seryl-[protein] + phosphate. The catalysed reaction is O-phospho-L-threonyl-[protein] + H2O = L-threonyl-[protein] + phosphate. Its function is as follows. Acts as a suppressor of the SAPK signaling pathways by associating with and dephosphorylating MAP3K7/TAK1 and MAP3K5, and by attenuating the association between MAP3K7/TAK1 and MAP2K4 or MAP2K6. The sequence is that of Protein phosphatase 1L (PPM1L) from Homo sapiens (Human).